The primary structure comprises 267 residues: Deoxyribose-phosphate aldolase (267 aa).

Residue Asp123 is the Proton donor/acceptor of the active site. The active-site Schiff-base intermediate with acetaldehyde is the Lys185. Lys217 (proton donor/acceptor) is an active-site residue.

It belongs to the DeoC/FbaB aldolase family. DeoC type 1 subfamily.

It localises to the cytoplasm. It carries out the reaction 2-deoxy-D-ribose 5-phosphate = D-glyceraldehyde 3-phosphate + acetaldehyde. The protein operates within carbohydrate degradation; 2-deoxy-D-ribose 1-phosphate degradation; D-glyceraldehyde 3-phosphate and acetaldehyde from 2-deoxy-alpha-D-ribose 1-phosphate: step 2/2. Its function is as follows. Catalyzes a reversible aldol reaction between acetaldehyde and D-glyceraldehyde 3-phosphate to generate 2-deoxy-D-ribose 5-phosphate. In Coccidioides immitis (strain RS) (Valley fever fungus), this protein is Deoxyribose-phosphate aldolase.